Reading from the N-terminus, the 178-residue chain is Large ribosomal subunit protein uL5 (178 aa).

Alanine 2 is subject to N-acetylalanine. Lysine 38 is covalently cross-linked (Glycyl lysine isopeptide (Lys-Gly) (interchain with G-Cter in SUMO2)). Threonine 44 and threonine 47 each carry phosphothreonine. The residue at position 52 (lysine 52) is an N6-acetyllysine; alternate. Residue lysine 52 forms a Glycyl lysine isopeptide (Lys-Gly) (interchain with G-Cter in SUMO2); alternate linkage. Lysine 85 bears the N6-acetyllysine mark. Lysine 154 participates in a covalent cross-link: Glycyl lysine isopeptide (Lys-Gly) (interchain with G-Cter in SUMO2).

Belongs to the universal ribosomal protein uL5 family. As to quaternary structure, component of the large ribosomal subunit (LSU). Part of the 5S RNP complex, which is a LSU subcomplex composed of the 5S RNA, RPL5 and RPL11. Component of a hexameric 5S RNP precursor complex, composed of 5S RNA, RRS1, RPF2/BXDC1, RPL5, RPL11 and HEATR3; this complex acts as a precursor for ribosome assembly. Interacts with PML. Interacts with MDM2 (via its RanBP2-type zinc finger domain); negatively regulates MDM2-mediated TP53 ubiquitination and degradation. Interacts with NOP53; retains RPL11 into the nucleolus.

Its subcellular location is the nucleus. The protein resides in the nucleolus. The protein localises to the cytoplasm. In terms of biological role, component of the ribosome, a large ribonucleoprotein complex responsible for the synthesis of proteins in the cell. The small ribosomal subunit (SSU) binds messenger RNAs (mRNAs) and translates the encoded message by selecting cognate aminoacyl-transfer RNA (tRNA) molecules. The large subunit (LSU) contains the ribosomal catalytic site termed the peptidyl transferase center (PTC), which catalyzes the formation of peptide bonds, thereby polymerizing the amino acids delivered by tRNAs into a polypeptide chain. The nascent polypeptides leave the ribosome through a tunnel in the LSU and interact with protein factors that function in enzymatic processing, targeting, and the membrane insertion of nascent chains at the exit of the ribosomal tunnel. As part of the 5S RNP/5S ribonucleoprotein particle it is an essential component of the LSU, required for its formation and the maturation of rRNAs. It also couples ribosome biogenesis to p53/TP53 activation. As part of the 5S RNP it accumulates in the nucleoplasm and inhibits MDM2, when ribosome biogenesis is perturbed, mediating the stabilization and the activation of TP53. Promotes nucleolar location of PML. The polypeptide is Large ribosomal subunit protein uL5 (RPL11) (Pongo abelii (Sumatran orangutan)).